Consider the following 244-residue polypeptide: uncharacterized protein (244 aa).

This is an uncharacterized protein from Encephalitozoon cuniculi (strain GB-M1) (Microsporidian parasite).